The chain runs to 243 residues: 1-(5-phosphoribosyl)-5-[(5-phosphoribosylamino)methylideneamino] imidazole-4-carboxamide isomerase (243 aa).

The Proton acceptor role is filled by Asp8. Asp130 functions as the Proton donor in the catalytic mechanism.

Belongs to the HisA/HisF family.

It is found in the cytoplasm. The enzyme catalyses 1-(5-phospho-beta-D-ribosyl)-5-[(5-phospho-beta-D-ribosylamino)methylideneamino]imidazole-4-carboxamide = 5-[(5-phospho-1-deoxy-D-ribulos-1-ylimino)methylamino]-1-(5-phospho-beta-D-ribosyl)imidazole-4-carboxamide. It participates in amino-acid biosynthesis; L-histidine biosynthesis; L-histidine from 5-phospho-alpha-D-ribose 1-diphosphate: step 4/9. The protein is 1-(5-phosphoribosyl)-5-[(5-phosphoribosylamino)methylideneamino] imidazole-4-carboxamide isomerase of Vesicomyosocius okutanii subsp. Calyptogena okutanii (strain HA).